Consider the following 441-residue polypeptide: Ribulose bisphosphate carboxylase large chain (441 aa).

K5 carries the N6,N6,N6-trimethyllysine modification. Residues N114 and T164 each contribute to the substrate site. K166 (proton acceptor) is an active-site residue. Residue K168 coordinates substrate. Residues K192, D194, and E195 each contribute to the Mg(2+) site. K192 bears the N6-carboxylysine mark. H285 functions as the Proton acceptor in the catalytic mechanism. 3 residues coordinate substrate: R286, H318, and S370.

It belongs to the RuBisCO large chain family. Type I subfamily. Heterohexadecamer of 8 large chains and 8 small chains; disulfide-linked. The disulfide link is formed within the large subunit homodimers. Mg(2+) is required as a cofactor. Post-translationally, the disulfide bond which can form in the large chain dimeric partners within the hexadecamer appears to be associated with oxidative stress and protein turnover.

The protein resides in the plastid. It localises to the chloroplast. It catalyses the reaction 2 (2R)-3-phosphoglycerate + 2 H(+) = D-ribulose 1,5-bisphosphate + CO2 + H2O. It carries out the reaction D-ribulose 1,5-bisphosphate + O2 = 2-phosphoglycolate + (2R)-3-phosphoglycerate + 2 H(+). Its function is as follows. RuBisCO catalyzes two reactions: the carboxylation of D-ribulose 1,5-bisphosphate, the primary event in carbon dioxide fixation, as well as the oxidative fragmentation of the pentose substrate in the photorespiration process. Both reactions occur simultaneously and in competition at the same active site. The polypeptide is Ribulose bisphosphate carboxylase large chain (Pellaea andromedifolia (Coffee fern)).